We begin with the raw amino-acid sequence, 98 residues long: Gas vesicle protein A (98 aa).

It belongs to the gas vesicle GvpA family. As to quaternary structure, the gas vesicle shell is 2 nm thick and consists of a single layer of this protein. It forms helical ribs nearly perpendicular to the long axis of the vesicle.

Its subcellular location is the gas vesicle shell. Functionally, gas vesicles are hollow, gas filled proteinaceous nanostructures found in some microorganisms. During planktonic growth they allow positioning of the organism at a favorable depth for light or nutrient acquisition. GvpA forms the protein shell. This chain is Gas vesicle protein A, found in Koribacter versatilis (strain Ellin345).